A 141-amino-acid polypeptide reads, in one-letter code: Cystatin (141 aa).

Residues 1–26 (MVHSQLPVAGPLRLLCALLLLPSATM) form the signal peptide. The Cystatin domain occupies 29–129 (GGLSPRSVTD…CRFQVWSRPW (101 aa)). The Secondary area of contact motif lies at 73–77 (QVVSG). Intrachain disulfides connect Cys91-Cys107 and Cys120-Cys140.

This sequence belongs to the cystatin family. As to expression, expressed at a low level by the venom gland (at protein level).

It localises to the secreted. In terms of biological role, inhibits various C1 cysteine proteases including cathepsin L, papain and cathepsin B. This protein has no toxic activity and its function in the venom is unknown. It may play a role as a housekeeping or regulatory protein. This Pseudechis porphyriacus (Red-bellied black snake) protein is Cystatin.